A 255-amino-acid polypeptide reads, in one-letter code: Imidazole glycerol phosphate synthase subunit HisF (255 aa).

Active-site residues include Asp-11 and Asp-130.

This sequence belongs to the HisA/HisF family. In terms of assembly, heterodimer of HisH and HisF.

It localises to the cytoplasm. The catalysed reaction is 5-[(5-phospho-1-deoxy-D-ribulos-1-ylimino)methylamino]-1-(5-phospho-beta-D-ribosyl)imidazole-4-carboxamide + L-glutamine = D-erythro-1-(imidazol-4-yl)glycerol 3-phosphate + 5-amino-1-(5-phospho-beta-D-ribosyl)imidazole-4-carboxamide + L-glutamate + H(+). It functions in the pathway amino-acid biosynthesis; L-histidine biosynthesis; L-histidine from 5-phospho-alpha-D-ribose 1-diphosphate: step 5/9. In terms of biological role, IGPS catalyzes the conversion of PRFAR and glutamine to IGP, AICAR and glutamate. The HisF subunit catalyzes the cyclization activity that produces IGP and AICAR from PRFAR using the ammonia provided by the HisH subunit. This Campylobacter jejuni subsp. jejuni serotype O:6 (strain 81116 / NCTC 11828) protein is Imidazole glycerol phosphate synthase subunit HisF.